Here is an 85-residue protein sequence, read N- to C-terminus: Putative sodium channel toxin Ts34 (85 aa).

The first 17 residues, 1 to 17 (MNLPLLLLITILIEIHA), serve as a signal peptide directing secretion. The LCN-type CS-alpha/beta domain maps to 19 to 82 (KDGYVIYKNS…IYGETGSYCW (64 aa)). 4 disulfides stabilise this stretch: Cys30–Cys81, Cys34–Cys57, Cys43–Cys62, and Cys47–Cys64.

It belongs to the long (4 C-C) scorpion toxin superfamily. Sodium channel inhibitor family. As to expression, expressed by the venom gland.

It localises to the secreted. Functionally, putative sodium channel toxin. The protein is Putative sodium channel toxin Ts34 of Tityus serrulatus (Brazilian scorpion).